The chain runs to 144 residues: Signal recognition particle 19 kDa protein (144 aa).

Residues 117–144 (TRTQKTGGGDQSLQQGEGSKKGKGKKKK) are disordered.

It belongs to the SRP19 family. As to quaternary structure, component of a signal recognition particle complex that consists of a 7SL RNA molecule of 300 nucleotides and six protein subunits: SRP72, SRP68, SRP54, SRP19, SRP14 and SRP9. Interacts with IPO5, IPO7, IPO8, KPNB1 and TNPO1. Interactions with IPO8 and TNPO1 may be involved in SRP19 import into the nucleus.

It localises to the cytoplasm. The protein resides in the nucleus. Its subcellular location is the nucleolus. It is found in the nucleoplasm. Its function is as follows. Component of the signal recognition particle (SRP) complex, a ribonucleoprotein complex that mediates the cotranslational targeting of secretory and membrane proteins to the endoplasmic reticulum (ER). Binds directly to 7SL RNA. Mediates binding of SRP54 to the SRP complex. The protein is Signal recognition particle 19 kDa protein of Canis lupus familiaris (Dog).